Consider the following 474-residue polypeptide: MAEANGKITQVIGAVVDVQFDGQLPAILNALETENNGKRLVLEVAQHLGENTVRTIAMDATEGLVRGLPVKDTGGPIMVPVGDATLGRILNVVGEPVDEGGPVEATQTRAIHQQAPDFAAQATASEILVTGIKVIDLLAPYSKGGKIGLFGGAGVGKTVLIMELINNIAKVHSGYSVFAGVGERTREGNDLYHEMVESGVIKPDDLSKSQVALVYGQMNEPPGARMRVALTGLTVAEQFRDATGTDVLFFVDNIFRFTQAGSEVSALLGRIPSAVGYQPTLATDMGAMQERITSTKNGSITSIQAVYVPADDLTDPAPATTFAHLDATTVLSRAISELGIYPAVDPLDSNSRILDPAVVGEEHYQVARDVQGILQKYKSLQDIIAILGMDELSEEDKLTVARARKIQRFLSQPFDVAKVFTGSDGVQVPLEDTIKSFKAVVAGEYDHLPEAAFYMVGGIEDVKAKAQRLAADAA.

151 to 158 is an ATP binding site; the sequence is GGAGVGKT.

This sequence belongs to the ATPase alpha/beta chains family. As to quaternary structure, F-type ATPases have 2 components, CF(1) - the catalytic core - and CF(0) - the membrane proton channel. CF(1) has five subunits: alpha(3), beta(3), gamma(1), delta(1), epsilon(1). CF(0) has three main subunits: a(1), b(2) and c(9-12). The alpha and beta chains form an alternating ring which encloses part of the gamma chain. CF(1) is attached to CF(0) by a central stalk formed by the gamma and epsilon chains, while a peripheral stalk is formed by the delta and b chains.

It localises to the cell inner membrane. The catalysed reaction is ATP + H2O + 4 H(+)(in) = ADP + phosphate + 5 H(+)(out). Produces ATP from ADP in the presence of a proton gradient across the membrane. The catalytic sites are hosted primarily by the beta subunits. The sequence is that of ATP synthase subunit beta from Paracoccus denitrificans (strain Pd 1222).